Here is a 212-residue protein sequence, read N- to C-terminus: MGGRWSKSSIVGWPAIRERIRRTDPRRTDPAADGVGAASRDLEKHGAITSSNTRDTNADCAWLEAQEESEEVGFPVRPQVPLRPMTYKLAVDLSHFLKEKGGLEGLIWSKKRQEILDLWVYNTQGIFPDWQNYTPGPGIRYPLTFGWCFELVPVDPREVEEATEGETNCLLHPVCQHGMEDTEREVLKWRFNSRLAFEHKAREMHPEFYKDC.

The N-myristoyl glycine; by host moiety is linked to residue Gly2. The residue at position 6 (Ser6) is a Phosphoserine; by host. The segment at 67–71 (EESEE) is acidic; interacts with host PACS1 and PACS2; stabilizes the interaction of NEF/MHC-I with host AP1M1; necessary for MHC-I internalization. Residues 75 to 84 (PVRPQVPLRP) are SH3-binding; interaction with Src family tyrosine kinases. The PxxP; stabilizes the interaction of NEF/MHC-I with host AP1M1; necessary for MHC-I internalization signature appears at 78–81 (PQVP). Positions 114 to 130 (EILDLWVYNTQGIFPDW) are mediates dimerization, Nef-PTE1 interaction. The binding to ATP6V1H stretch occupies residues 154–186 (VDPREVEEATEGETNCLLHPVCQHGMEDTEREV). A Dileucine internalization motif; necessary for CD4 internalization motif is present at residues 170 to 171 (LL). Residues 180–181 (ED) carry the Diacidic; necessary for CD4 internalization motif.

The protein belongs to the lentivirus primate group Nef protein family. As to quaternary structure, monomer; cytosolic form. Homodimer; membrane bound form. Interacts with Nef associated p21-activated kinase (PAK2); this interaction activates PAK2. Associates with the Nef-MHC-I-AP1 complex; this complex is required for MHC-I internalization. Interacts (via C-terminus) with host PI3-kinase. Interacts with host PACS1; this interaction seems to be weak. Interacts with host PACS2. Interacts with host LCK and MAPK3; these interactions inhibit the kinase activity of the latter. Interacts with host ATP6V1H; this interaction may play a role in CD4 endocytosis. Associates with the CD4-Nef-AP2 complex; this complex is required for CD4 internalization. Interacts with host AP2 subunit alpha and AP2 subunit sigma2. Interacts with TCR-zeta chain; this interaction up-regulates the Fas ligand (FasL) surface expression. Interacts with host HCK, LYN, and SRC; these interactions activate the Src family kinases. Interacts with MAP3K5; this interaction inhibits the Fas and TNFR-mediated death signals. Interacts with beta-COP and PTE1. Interacts with human RACK1; this increases Nef phosphorylation by PKC. Interacts with TP53; this interaction decreases the half-life of TP53, protecting the infected cell against p53-mediated apoptosis. Post-translationally, the virion-associated Nef proteins are cleaved by the viral protease to release the soluble C-terminal core protein. Nef is probably cleaved concomitantly with viral structural proteins on maturation of virus particles. In terms of processing, myristoylated. Phosphorylated on serine residues, probably by host PKCdelta and theta.

The protein resides in the host cell membrane. It is found in the virion. The protein localises to the secreted. Its subcellular location is the host Golgi apparatus membrane. In terms of biological role, factor of infectivity and pathogenicity, required for optimal virus replication. Alters numerous pathways of T-lymphocyte function and down-regulates immunity surface molecules in order to evade host defense and increase viral infectivity. Alters the functionality of other immunity cells, like dendritic cells, monocytes/macrophages and NK cells. In infected CD4(+) T-lymphocytes, down-regulates the surface MHC-I, mature MHC-II, CD4, CD28, CCR5 and CXCR4 molecules. Mediates internalization and degradation of host CD4 through the interaction of with the cytoplasmic tail of CD4, the recruitment of AP-2 (clathrin adapter protein complex 2), internalization through clathrin coated pits, and subsequent transport to endosomes and lysosomes for degradation. Diverts host MHC-I molecules to the trans-Golgi network-associated endosomal compartments by an endocytic pathway to finally target them for degradation. MHC-I down-regulation may involve AP-1 (clathrin adapter protein complex 1) or possibly Src family kinase-ZAP70/Syk-PI3K cascade recruited by PACS2. In consequence infected cells are masked for immune recognition by cytotoxic T-lymphocytes. Decreasing the number of immune receptors also prevents reinfection by more HIV particles (superinfection). Down-regulates host SERINC3 and SERINC5 thereby excluding these proteins from the viral particles. Virion infectivity is drastically higher when SERINC3 or SERINC5 are excluded from the viral envelope, because these host antiviral proteins impair the membrane fusion event necessary for subsequent virion penetration. Its function is as follows. Bypasses host T-cell signaling by inducing a transcriptional program nearly identical to that of anti-CD3 cell activation. Interaction with TCR-zeta chain up-regulates the Fas ligand (FasL). Increasing surface FasL molecules and decreasing surface MHC-I molecules on infected CD4(+) cells send attacking cytotoxic CD8+ T-lymphocytes into apoptosis. Functionally, plays a role in optimizing the host cell environment for viral replication without causing cell death by apoptosis. Protects the infected cells from apoptosis in order to keep them alive until the next virus generation is ready to strike. Inhibits the Fas and TNFR-mediated death signals by blocking MAP3K5/ASK1. Decreases the half-life of TP53, protecting the infected cell against p53-mediated apoptosis. Inhibits the apoptotic signals regulated by the Bcl-2 family proteins through the formation of a Nef/PI3-kinase/PAK2 complex that leads to activation of PAK2 and induces phosphorylation of host BAD. In terms of biological role, extracellular Nef protein targets CD4(+) T-lymphocytes for apoptosis by interacting with CXCR4 surface receptors. The protein is Protein Nef of Homo sapiens (Human).